The chain runs to 240 residues: MRTLFIGDLHLSADRLDITQAFTRFLDTELDDADALYILGDLFEVWVGDDIALPFALELAEKLKQVSQKLPVYFIHGNRDFMLGKQFARAAGMQILPEVTCLNLYGVETVILHGDSLCTLDKAYQRFRKLRSLSLARWLYGCLSKKTRQGIADKIRSNSKSSNQQKSYTIMDVEPNAVDALFAKTHTKHMIHGHTHRPAIHLLANDCQRIVVGDWYEQGSVLSVSAEGINLQSLPFEHTT.

Positions 8, 10, 41, 78, and 113 each coordinate Mn(2+). 78 to 79 (NR) provides a ligand contact to substrate. The substrate site is built by D121, S159, N163, K166, and H194. Residues H194 and H196 each contribute to the Mn(2+) site.

Belongs to the LpxH family. The cofactor is Mn(2+).

It is found in the cell inner membrane. It carries out the reaction UDP-2-N,3-O-bis[(3R)-3-hydroxytetradecanoyl]-alpha-D-glucosamine + H2O = 2-N,3-O-bis[(3R)-3-hydroxytetradecanoyl]-alpha-D-glucosaminyl 1-phosphate + UMP + 2 H(+). It participates in glycolipid biosynthesis; lipid IV(A) biosynthesis; lipid IV(A) from (3R)-3-hydroxytetradecanoyl-[acyl-carrier-protein] and UDP-N-acetyl-alpha-D-glucosamine: step 4/6. Its function is as follows. Hydrolyzes the pyrophosphate bond of UDP-2,3-diacylglucosamine to yield 2,3-diacylglucosamine 1-phosphate (lipid X) and UMP by catalyzing the attack of water at the alpha-P atom. Involved in the biosynthesis of lipid A, a phosphorylated glycolipid that anchors the lipopolysaccharide to the outer membrane of the cell. This chain is UDP-2,3-diacylglucosamine hydrolase, found in Shewanella baltica (strain OS185).